The primary structure comprises 294 residues: MSDYLVKALAYDGMARVYAAVTTETIKEAQRRHDTWSVSSAALGRTMTGTLFLGAMQKEDQKITVKIEGDGPIGPIVADSNAQGQIRGYVTNPHVHFSELNEAGKLDVRRGVGTSGMLSVVKDLGFGENFTGQTPIVSGEIGEDFTYYLATSEQINSSVGVGVLVNPDDTIEAAGGFMLQLLPGATDEIIDEIEKNLTALPTVSRMIEAGETPESILAKLAGGEDKLQILEKIPVSFECNCSKERFGSAIISLGKEEIRSMIEEDHGAEAECHFCRNTYDFSEEELEKLYEEAK.

2 disulfides stabilise this stretch: Cys239/Cys241 and Cys272/Cys275.

This sequence belongs to the HSP33 family. Post-translationally, under oxidizing conditions two disulfide bonds are formed involving the reactive cysteines. Under reducing conditions zinc is bound to the reactive cysteines and the protein is inactive.

It localises to the cytoplasm. Its function is as follows. Redox regulated molecular chaperone. Protects both thermally unfolding and oxidatively damaged proteins from irreversible aggregation. Plays an important role in the bacterial defense system toward oxidative stress. This chain is 33 kDa chaperonin, found in Listeria monocytogenes serotype 4a (strain HCC23).